Reading from the N-terminus, the 329-residue chain is Beta-ketoacyl-[acyl-carrier-protein] synthase III (329 aa).

Catalysis depends on residues Cys-123 and His-256. Positions Gln-257 to Arg-261 are ACP-binding. The active site involves Asn-286.

Belongs to the thiolase-like superfamily. FabH family. In terms of assembly, homodimer.

It is found in the cytoplasm. It catalyses the reaction malonyl-[ACP] + acetyl-CoA + H(+) = 3-oxobutanoyl-[ACP] + CO2 + CoA. The protein operates within lipid metabolism; fatty acid biosynthesis. Its function is as follows. Catalyzes the condensation reaction of fatty acid synthesis by the addition to an acyl acceptor of two carbons from malonyl-ACP. Catalyzes the first condensation reaction which initiates fatty acid synthesis and may therefore play a role in governing the total rate of fatty acid production. Possesses both acetoacetyl-ACP synthase and acetyl transacylase activities. Its substrate specificity determines the biosynthesis of branched-chain and/or straight-chain of fatty acids. The chain is Beta-ketoacyl-[acyl-carrier-protein] synthase III from Burkholderia vietnamiensis (strain G4 / LMG 22486) (Burkholderia cepacia (strain R1808)).